The sequence spans 319 residues: NH(3)-dependent NAD(+) synthetase (319 aa).

33-40 (GLSGGIDS) lines the ATP pocket. Position 39 (Asp-39) interacts with Mg(2+). Deamido-NAD(+) is bound at residue Arg-169. Thr-189 contributes to the ATP binding site. Residue Glu-194 participates in Mg(2+) binding. Deamido-NAD(+) contacts are provided by Lys-202 and Asp-209. ATP contacts are provided by Lys-218 and Thr-240.

This sequence belongs to the NAD synthetase family. In terms of assembly, homodimer.

It catalyses the reaction deamido-NAD(+) + NH4(+) + ATP = AMP + diphosphate + NAD(+) + H(+). The protein operates within cofactor biosynthesis; NAD(+) biosynthesis; NAD(+) from deamido-NAD(+) (ammonia route): step 1/1. In terms of biological role, catalyzes the ATP-dependent amidation of deamido-NAD to form NAD. Uses ammonia as a nitrogen source. The polypeptide is NH(3)-dependent NAD(+) synthetase (Mesorhizobium japonicum (strain LMG 29417 / CECT 9101 / MAFF 303099) (Mesorhizobium loti (strain MAFF 303099))).